We begin with the raw amino-acid sequence, 145 residues long: Basic phospholipase A2 PC17 (145 aa).

Positions 1 to 21 (MYPAHLLLLLAVCVSLLGASA) are cleaved as a signal peptide. The propeptide occupies 22-27 (IPPLPL). Cystine bridges form between Cys38-Cys98, Cys54-Cys144, Cys56-Cys72, Cys71-Cys125, Cys78-Cys118, Cys87-Cys111, and Cys105-Cys116. 3 residues coordinate Ca(2+): Tyr55, Gly57, and Gly59. The active site involves His75. Ca(2+) is bound at residue Asp76. The active site involves Asp119.

The protein belongs to the phospholipase A2 family. Group I subfamily. D49 sub-subfamily. It depends on Ca(2+) as a cofactor.

It localises to the secreted. It catalyses the reaction a 1,2-diacyl-sn-glycero-3-phosphocholine + H2O = a 1-acyl-sn-glycero-3-phosphocholine + a fatty acid + H(+). In terms of biological role, PLA2 catalyzes the calcium-dependent hydrolysis of the 2-acyl groups in 3-sn-phosphoglycerides. This chain is Basic phospholipase A2 PC17, found in Laticauda laticaudata (Blue-ringed sea krait).